The primary structure comprises 393 residues: Methylthioribose-1-phosphate isomerase (393 aa).

The active-site Proton donor is Asp265.

This sequence belongs to the eIF-2B alpha/beta/delta subunits family. MtnA subfamily.

It is found in the cytoplasm. The protein localises to the nucleus. It catalyses the reaction 5-(methylsulfanyl)-alpha-D-ribose 1-phosphate = 5-(methylsulfanyl)-D-ribulose 1-phosphate. It functions in the pathway amino-acid biosynthesis; L-methionine biosynthesis via salvage pathway; L-methionine from S-methyl-5-thio-alpha-D-ribose 1-phosphate: step 1/6. Catalyzes the interconversion of methylthioribose-1-phosphate (MTR-1-P) into methylthioribulose-1-phosphate (MTRu-1-P). The polypeptide is Methylthioribose-1-phosphate isomerase (Cryptococcus neoformans var. neoformans serotype D (strain B-3501A) (Filobasidiella neoformans)).